The sequence spans 239 residues: Phosphoribosylaminoimidazole-succinocarboxamide synthase (239 aa).

This sequence belongs to the SAICAR synthetase family.

It catalyses the reaction 5-amino-1-(5-phospho-D-ribosyl)imidazole-4-carboxylate + L-aspartate + ATP = (2S)-2-[5-amino-1-(5-phospho-beta-D-ribosyl)imidazole-4-carboxamido]succinate + ADP + phosphate + 2 H(+). Its pathway is purine metabolism; IMP biosynthesis via de novo pathway; 5-amino-1-(5-phospho-D-ribosyl)imidazole-4-carboxamide from 5-amino-1-(5-phospho-D-ribosyl)imidazole-4-carboxylate: step 1/2. The protein is Phosphoribosylaminoimidazole-succinocarboxamide synthase of Campylobacter hominis (strain ATCC BAA-381 / DSM 21671 / CCUG 45161 / LMG 19568 / NCTC 13146 / CH001A).